A 395-amino-acid polypeptide reads, in one-letter code: Dihydrolipoyllysine-residue succinyltransferase component of 2-oxoglutarate dehydrogenase complex (395 aa).

In terms of domain architecture, Lipoyl-binding spans 2–77; the sequence is RVKIIVPSLG…AVGEEIGEIN (76 aa). An N6-lipoyllysine modification is found at Lys43. The region spanning 111-148 is the Peripheral subunit-binding (PSBD) domain; sequence TLAPSVQKLVTENKLDPNNIKGTGRDGRITKGDVLATI. Active-site residues include His366 and Asp370.

Belongs to the 2-oxoacid dehydrogenase family. Forms a 24-polypeptide structural core with octahedral symmetry. Part of the 2-oxoglutarate dehydrogenase (OGDH) complex composed of E1 (2-oxoglutarate dehydrogenase), E2 (dihydrolipoamide succinyltransferase) and E3 (dihydrolipoamide dehydrogenase); the complex contains multiple copies of the three enzymatic components (E1, E2 and E3). It depends on (R)-lipoate as a cofactor.

The enzyme catalyses N(6)-[(R)-dihydrolipoyl]-L-lysyl-[protein] + succinyl-CoA = N(6)-[(R)-S(8)-succinyldihydrolipoyl]-L-lysyl-[protein] + CoA. The protein operates within amino-acid degradation; L-lysine degradation via saccharopine pathway; glutaryl-CoA from L-lysine: step 6/6. Its function is as follows. E2 component of the 2-oxoglutarate dehydrogenase (OGDH) complex which catalyzes the second step in the conversion of 2-oxoglutarate to succinyl-CoA and CO(2). This chain is Dihydrolipoyllysine-residue succinyltransferase component of 2-oxoglutarate dehydrogenase complex (sucB), found in Rickettsia conorii (strain ATCC VR-613 / Malish 7).